The following is a 191-amino-acid chain: Thioredoxin F-type, chloroplastic (191 aa).

Residues K68–S190 enclose the Thioredoxin domain. Catalysis depends on nucleophile residues C115 and C118. C115 and C118 are oxidised to a cystine.

It belongs to the thioredoxin family. Plant F-type subfamily. As to quaternary structure, forms a complex with heterodimeric ferredoxin-thioredoxin reductase (FTR) and ferredoxin.

The protein resides in the plastid. Its subcellular location is the chloroplast. Participates in various redox reactions through the reversible oxidation of the active center dithiol to a disulfide. The F form is known to activate a number of enzymes of the photosynthetic carbon cycle. This chain is Thioredoxin F-type, chloroplastic, found in Mesembryanthemum crystallinum (Common ice plant).